The chain runs to 102 residues: Integration host factor subunit alpha (102 aa).

The protein belongs to the bacterial histone-like protein family. Heterodimer of an alpha and a beta chain.

Functionally, this protein is one of the two subunits of integration host factor, a specific DNA-binding protein that functions in genetic recombination as well as in transcriptional and translational control. This Paracoccus denitrificans (strain Pd 1222) protein is Integration host factor subunit alpha.